The chain runs to 356 residues: Probable dual-specificity RNA methyltransferase RlmN (356 aa).

E97 (proton acceptor) is an active-site residue. The Radical SAM core domain maps to 103–333 (YHHGNSVCIS…VTIRREMGSD (231 aa)). An intrachain disulfide couples C110 to C338. Positions 117, 121, and 124 each coordinate [4Fe-4S] cluster. S-adenosyl-L-methionine-binding positions include 164–165 (GE), S196, 219–221 (SLH), and N295. The active-site S-methylcysteine intermediate is C338.

This sequence belongs to the radical SAM superfamily. RlmN family. [4Fe-4S] cluster is required as a cofactor.

It localises to the cytoplasm. It carries out the reaction adenosine(2503) in 23S rRNA + 2 reduced [2Fe-2S]-[ferredoxin] + 2 S-adenosyl-L-methionine = 2-methyladenosine(2503) in 23S rRNA + 5'-deoxyadenosine + L-methionine + 2 oxidized [2Fe-2S]-[ferredoxin] + S-adenosyl-L-homocysteine. It catalyses the reaction adenosine(37) in tRNA + 2 reduced [2Fe-2S]-[ferredoxin] + 2 S-adenosyl-L-methionine = 2-methyladenosine(37) in tRNA + 5'-deoxyadenosine + L-methionine + 2 oxidized [2Fe-2S]-[ferredoxin] + S-adenosyl-L-homocysteine. Specifically methylates position 2 of adenine 2503 in 23S rRNA and position 2 of adenine 37 in tRNAs. This is Probable dual-specificity RNA methyltransferase RlmN from Lachnoclostridium phytofermentans (strain ATCC 700394 / DSM 18823 / ISDg) (Clostridium phytofermentans).